The following is an 878-amino-acid chain: Alanine--tRNA ligase (878 aa).

Positions 566, 570, 668, and 672 each coordinate Zn(2+).

The protein belongs to the class-II aminoacyl-tRNA synthetase family. Zn(2+) serves as cofactor.

The protein localises to the cytoplasm. It catalyses the reaction tRNA(Ala) + L-alanine + ATP = L-alanyl-tRNA(Ala) + AMP + diphosphate. Its function is as follows. Catalyzes the attachment of alanine to tRNA(Ala) in a two-step reaction: alanine is first activated by ATP to form Ala-AMP and then transferred to the acceptor end of tRNA(Ala). Also edits incorrectly charged Ser-tRNA(Ala) and Gly-tRNA(Ala) via its editing domain. In Bacillus velezensis (strain DSM 23117 / BGSC 10A6 / LMG 26770 / FZB42) (Bacillus amyloliquefaciens subsp. plantarum), this protein is Alanine--tRNA ligase.